The following is a 489-amino-acid chain: N-succinylglutamate 5-semialdehyde dehydrogenase (489 aa).

Residue 223 to 228 (GSASTG) participates in NAD(+) binding. Residues Glu246 and Cys280 contribute to the active site.

This sequence belongs to the aldehyde dehydrogenase family. AstD subfamily.

The enzyme catalyses N-succinyl-L-glutamate 5-semialdehyde + NAD(+) + H2O = N-succinyl-L-glutamate + NADH + 2 H(+). The protein operates within amino-acid degradation; L-arginine degradation via AST pathway; L-glutamate and succinate from L-arginine: step 4/5. Its function is as follows. Catalyzes the NAD-dependent reduction of succinylglutamate semialdehyde into succinylglutamate. The sequence is that of N-succinylglutamate 5-semialdehyde dehydrogenase from Acinetobacter baylyi (strain ATCC 33305 / BD413 / ADP1).